Here is a 357-residue protein sequence, read N- to C-terminus: Protein BMRF2 (357 aa).

Over 1–11 (MFSCKQHLSLG) the chain is Virion surface. Over 12-32 (ACVFCLGLLASTPFIWCFVFA) the chain traverses the membrane. Residues 33–46 (NLLSLEIFSPWQTH) are Intravirion-facing. Positions 47 to 67 (VYRLGFPTACLMAVLWTLVPA) form a transmembrane segment. Residues 68–70 (KHA) lie on the Virion surface side of the membrane. The segment at 71–91 (VRAVTPAIMLNIASALIFFSL) is a transmembrane helix. Residues 92-98 (RVYSTST) lie on the Intravirion side of the membrane. Over 99-121 (WVSAPCLFLANLPLLCLWPRLAI) the chain traverses the membrane. The Virion surface segment spans residues 122-133 (EIVYICPAIHQR). Positions 134–154 (FFELGLLLACTIFALSVVSRA) form a transmembrane segment. Residues 155–158 (LEVS) lie on the Intravirion side of the membrane. The segment at 159-179 (AVFMSPFFIFLALGSGSLAGA) is a transmembrane helix. The Virion surface portion of the chain corresponds to 180-217 (RRNQIYTSGLERRRSIFCARGDHSVASLKETLHKCPWD). The short motif at 199 to 201 (RGD) is the Integrin binding site element. The chain crosses the lipid bilayer at residues 218 to 238 (LLAISALTVLVVCVMIVLHVH). Over 239-240 (AE) the chain is Intravirion. The hydrophobic stretch at 241 to 261 (VFFGLSRYLPLFLCGAMASGG) threads the membrane. Over 262 to 267 (LYLGHS) the chain is Virion surface. The chain crosses the lipid bilayer at residues 268–288 (SIIACVMATLCTLSSVVVYFL). At 289–298 (HETLGPLGKT) the chain is on the intravirion side. A transmembrane span lies at residues 299–319 (VLFISIFVYYFSGVAALSAAM). Residues 320-335 (RYKLKKFVNGPLVHLR) lie on the Virion surface side of the membrane. Residues 336 to 356 (VVYMCCFVFTFCEYLLVTFIK) are membrane-embedded. A topological domain (intravirion) is located at residue Ser-357.

This sequence belongs to the herpesviridae BMRF2 family. In terms of assembly, interacts with BDLF2. Interacts with host beta1 integrin family. In terms of processing, extensively glycosylated by O-linked oligosaccharides.

The protein localises to the virion membrane. It localises to the host cell membrane. Its function is as follows. Facilitates virus attachment to oral epithelial cells by binding to host beta1 integrin family. Participates in rearrangement of cellular actin to increase intercellular contacts by binding BDLF2 and thereby promote virus cell-to-cell spreading. The polypeptide is Protein BMRF2 (Homo sapiens (Human)).